The following is a 1068-amino-acid chain: Receptor-like protein 13 (1068 aa).

The signal sequence occupies residues 1-23; the sequence is MEGKLFLGQYLICVILLLGQLHG. Topologically, residues 24–986 are extracellular; sequence YKSCIEKERK…EADESTVDME (963 aa). N-linked (GlcNAc...) asparagine glycans are attached at residues N59 and N97. LRR repeat units follow at residues 104–129, 139–162, 164–187, 188–212, 216–239, 241–264, 265–290, 292–315, 325–349, 350–373, 375–397, 398–423, 424–447, 448–471, 472–497, 499–517, 519–543, 544–567, and 569–594; these read FEDVRSLDLSSSRSCEDCGFSGLFDD, LRNLEILDLSSHRFNNSIFPFLNA, TSLTTLFLTYNNMHSPFLVKEFKD, LTNLEHLDLRGNRFNGSIPTQDYNS, FRKLEILDLSDNLFNSRIFPFLNS, TSLKSLSLWGNNMGGPFPAKELRD, LTNVELLDLSRNRFNGSIPVRALFAL, KLKALDLSDNEFSSSVELQGKFAK, WKNMEELKLSNNKLAGQFPLCLTSL, TGLRVLDLSSNQLTGNVPSALANL, SLEYLSLFGNNFEGFFSLGLLAN, LSKLKVLRLDSQSNSLEVEFETSWKP, KFQLVVIALRSCNLEKVPHFLLHQ, KDLHHVDLSDNQIHGNFPSWLLEN, NTKLEVLLLQNNSFTSFQLPKSAHNL, FLNVSVNKFNHLFLQNFGW, LPHLVCVNLAYNGFQGNLPSSLDNM, KSIEFLDLSHNRFHGKLPRRFLKG, and YNLTILKLSHNKLSGEVFPEAANFTR. N153 is a glycosylation site (N-linked (GlcNAc...) asparagine). A glycan (N-linked (GlcNAc...) asparagine) is linked at N202. The N-linked (GlcNAc...) asparagine glycan is linked to N279. The N-linked (GlcNAc...) asparagine glycan is linked to N397. N471, N482, and N501 each carry an N-linked (GlcNAc...) asparagine glycan. Residues N570 and N591 are each glycosylated (N-linked (GlcNAc...) asparagine). One copy of the LRR 20; degenerate repeat lies at 596–615; sequence WVMSMDNNLFTGNIGKGFRS. LRR repeat units follow at residues 616-639, 641-664, 665-688, 690-710, and 711-734; these read LPSLNVLDISNNKLTGVIPSWIGE, QGLFALQLSNNMLEGEIPTSLFNI, SYLQLLDLSSNRLSGDIPPHVSSI, HGAVLLLQNNNLSGVIPDTLL, and LNVIVLDLRNNRLSGNLPEFINTQ. N-linked (GlcNAc...) asparagine glycosylation is present at N663. N700 carries N-linked (GlcNAc...) asparagine glycosylation. N-linked (GlcNAc...) asparagine glycans are attached at residues N735, N745, N771, N780, and N822. 2 LRR repeats span residues 736 to 757 and 758 to 781; these read ISILLLRGNNFTGQIPHQFCSL and SNIQLLDLSNNKFNGSIPSCLSNT. LRR repeat units follow at residues 846–870, 871–893, 895–918, and 920–943; these read LKLLFGMDLSENELSGEIPVELGGL, VELEALNLSHNNLSGVILESFSG, KNVESLDLSFNRLQGPIPLQLTDM, and SLAVFNVSYNNLSGIVPQGRQFNT. 2 N-linked (GlcNAc...) asparagine glycosylation sites follow: N877 and N882. N-linked (GlcNAc...) asparagine glycans are attached at residues N925 and N930. Residues 987–1007 traverse the membrane as a helical segment; that stretch reads SFYWSFVAAYVTILLGILASL. Residues 1008-1068 are Cytoplasmic-facing; it reads SFDSPWSRAW…PPALFHKTRT (61 aa).

This sequence belongs to the RLP family.

It is found in the cell membrane. The sequence is that of Receptor-like protein 13 from Arabidopsis thaliana (Mouse-ear cress).